Consider the following 407-residue polypeptide: MEEEGSPDIIIVGAGISGLSTAVGLHRLGIRSMVLESSETLRATGFAFTTWFNAWKAMEALGVSQHIRSLHDRLEGWVVGTISAGTPPTEMLFPESEEYESRCVQRKLLLEALAGELPEETIRFSSKVVHIELSGCYKKVHLSDGTILKTKVLVGCDGVYSVVGKWLGFKNPATTARLAIRGLTHFPEGHGFGKRFFQFYGDGVRSGFIPCDHNTVYWFLTHTSTDIDEETNSEILKEFVLNKIKDLPENIKNVVETTDLDSMVMSQLKYRPPWELLWSNITKDNVCVAGDALHPMTPDIGQGGCSAMEDGVILARCLGEAIKAKSLKGETEENEEEGYKRIEEGLKKYAGERKWRSIDLITTAYTVGFIQQSRGKWMNMFRDRFLSSYLSRMLLKKSHFDCGSLVP.

It belongs to the 3-hydroxybenzoate 6-hydroxylase family. In terms of assembly, monomer. The cofactor is FAD. Expressed in seeds, seedlings, roots, leaves, flowers, pollen and siliques.

The protein is Monooxygenase 2 of Arabidopsis thaliana (Mouse-ear cress).